The primary structure comprises 89 residues: MSRSLRKGPYINVKLEKKILLMNESKKKSVVKTWARASMISPDFVGCTIAVHNGNKFIPVYITENMVGHKLGEFSPTRQFRGHAGNKKK.

Belongs to the universal ribosomal protein uS19 family.

Protein S19 forms a complex with S13 that binds strongly to the 16S ribosomal RNA. The sequence is that of Small ribosomal subunit protein uS19 from Azobacteroides pseudotrichonymphae genomovar. CFP2.